We begin with the raw amino-acid sequence, 188 residues long: D-glycero-beta-D-manno-heptose-1,7-bisphosphate 7-phosphatase (188 aa).

Positions 92, 94, 107, and 109 each coordinate Zn(2+).

The protein belongs to the GmhB family.

It localises to the cytoplasm. The catalysed reaction is D-glycero-beta-D-manno-heptose 1,7-bisphosphate + H2O = D-glycero-beta-D-manno-heptose 1-phosphate + phosphate. It participates in nucleotide-sugar biosynthesis; ADP-L-glycero-beta-D-manno-heptose biosynthesis; ADP-L-glycero-beta-D-manno-heptose from D-glycero-beta-D-manno-heptose 7-phosphate: step 2/4. It functions in the pathway bacterial outer membrane biogenesis; LPS core biosynthesis. Its function is as follows. Converts the D-glycero-beta-D-manno-heptose 1,7-bisphosphate intermediate into D-glycero-beta-D-manno-heptose 1-phosphate by removing the phosphate group at the C-7 position. The sequence is that of D-glycero-beta-D-manno-heptose-1,7-bisphosphate 7-phosphatase (gmhB1) from Photorhabdus laumondii subsp. laumondii (strain DSM 15139 / CIP 105565 / TT01) (Photorhabdus luminescens subsp. laumondii).